A 387-amino-acid chain; its full sequence is Monomeric sarcosine oxidase (387 aa).

6–36 is an FAD binding site; it reads DVIVVGAGSMGMAAGYYLAKQGVKTLLVDSF. C316 carries the post-translational modification S-8alpha-FAD cysteine.

This sequence belongs to the MSOX/MTOX family. MSOX subfamily. In terms of assembly, monomer. Requires FAD as cofactor.

It is found in the cytoplasm. It catalyses the reaction sarcosine + O2 + H2O = formaldehyde + glycine + H2O2. Functionally, catalyzes the oxidative demethylation of sarcosine. This is Monomeric sarcosine oxidase (soxA) from Bacillus sp. (strain NS-129).